We begin with the raw amino-acid sequence, 176 residues long: Cytochrome c-552 (176 aa).

A helical; Signal-anchor membrane pass occupies residues 12 to 32; it reads GALIGSLLFLLLMSWAASGIF. 5 residues coordinate heme c: Cys90, Cys93, His94, Met126, and Met154.

Binds 1 heme c group covalently per subunit.

The protein resides in the cell membrane. Its function is as follows. Mediates the electron transport between the cytochrome bc1 complex and cytochrome-c oxidase. This Paracoccus denitrificans protein is Cytochrome c-552 (cycM).